A 116-amino-acid chain; its full sequence is Large ribosomal subunit protein uL18 (116 aa).

It belongs to the universal ribosomal protein uL18 family. As to quaternary structure, part of the 50S ribosomal subunit; part of the 5S rRNA/L5/L18/L25 subcomplex. Contacts the 5S and 23S rRNAs.

This is one of the proteins that bind and probably mediate the attachment of the 5S RNA into the large ribosomal subunit, where it forms part of the central protuberance. In Shewanella sp. (strain ANA-3), this protein is Large ribosomal subunit protein uL18.